The sequence spans 98 residues: MIVTLLNALSAMAAFTAAGLWWRSTVIAVPFDHEIPEDGWRPAAILASGPKGDIDVFKTQNAANALNNRAAKAAALAAACQGTAIALPILQDMFHALV.

The next 2 helical transmembrane spans lie at 2–22 (IVTL…GLWW) and 70–90 (AAKA…LPIL).

It is found in the cell membrane. This is an uncharacterized protein from Sinorhizobium fredii (strain NBRC 101917 / NGR234).